Consider the following 205-residue polypeptide: Protein phosphatase inhibitor 2 (205 aa).

The interval Met-1–Ser-44 is disordered. Ala-2 bears the N-acetylalanine mark. 2 required for binding PPP1CC regions span residues Lys-12–Asn-17 and Lys-43–Thr-55. Positions Asn-17 to Val-26 are enriched in polar residues. The segment covering Asn-35 to Ser-44 has biased composition (basic and acidic residues). Residue Ser-44 is modified to Phosphoserine; by ATM. Residue Thr-73 is modified to Phosphothreonine; by GSK3. A Phosphoserine modification is found at Ser-87. Thr-89 and Thr-92 each carry phosphothreonine. The segment at Glu-111–Met-142 is disordered. Ser-121, Ser-122, Ser-127, and Ser-130 each carry phosphoserine. The segment covering Ser-121 to Ser-130 has biased composition (acidic residues). Positions Pro-131 to Met-142 are enriched in basic and acidic residues. A required for binding PPP1CC catalytic center, displacing metal ions and inhibition of PPP1CC catalytic activity region spans residues His-147–Glu-150. Residues Lys-163–Ser-205 are disordered. Positions Asp-167–Asp-179 are enriched in acidic residues. The span at Ser-182–Ser-205 shows a compositional bias: polar residues.

It belongs to the protein phosphatase inhibitor 2 family. Heterodimer with PP1. Post-translationally, phosphorylation on Thr-73 by GSK3 activates PP1 by dissociating the PP1-PPP1R2 complex. Phosphorylation on Ser-44 by ATM activates PP1 by dissociating the PP1-PPP1R2 complex.

Inhibitor of protein-phosphatase 1. In Homo sapiens (Human), this protein is Protein phosphatase inhibitor 2 (PPP1R2).